The following is a 179-amino-acid chain: Translation initiation factor IF-3 (179 aa).

It belongs to the IF-3 family. Monomer.

Its subcellular location is the cytoplasm. Functionally, IF-3 binds to the 30S ribosomal subunit and shifts the equilibrium between 70S ribosomes and their 50S and 30S subunits in favor of the free subunits, thus enhancing the availability of 30S subunits on which protein synthesis initiation begins. The protein is Translation initiation factor IF-3 of Lactococcus lactis subsp. lactis (strain IL1403) (Streptococcus lactis).